We begin with the raw amino-acid sequence, 180 residues long: FMN reductase (NADH) RutF (180 aa).

Belongs to the non-flavoprotein flavin reductase family. RutF subfamily.

It catalyses the reaction FMNH2 + NAD(+) = FMN + NADH + 2 H(+). Catalyzes the reduction of FMN to FMNH2 which is used to reduce pyrimidine by RutA via the Rut pathway. The protein is FMN reductase (NADH) RutF of Bradyrhizobium diazoefficiens (strain JCM 10833 / BCRC 13528 / IAM 13628 / NBRC 14792 / USDA 110).